The primary structure comprises 148 residues: Probable histone H2B.2 (148 aa).

Residues 1–32 are compositionally biased toward basic and acidic residues; sequence MAPKGEKKPAEKKPAEEKKSTVAEKAPAEKKP. The disordered stretch occupies residues 1–57; it reads MAPKGEKKPAEKKPAEEKKSTVAEKAPAEKKPKAGKKLPKEGGSAAGEKKKKRSKKS. 3 positions are modified to N6-acetyllysine: Lys-7, Lys-36, and Lys-37. Lys-144 is covalently cross-linked (Glycyl lysine isopeptide (Lys-Gly) (interchain with G-Cter in ubiquitin)).

The protein belongs to the histone H2B family. As to quaternary structure, the nucleosome is a histone octamer containing two molecules each of H2A, H2B, H3 and H4 assembled in one H3-H4 heterotetramer and two H2A-H2B heterodimers. The octamer wraps approximately 147 bp of DNA. In terms of processing, can be acetylated to form H2BK6ac, H2BK33ac and H2BK34ac. Monoubiquitinated to form H2BK143ub1; may give a specific tag for epigenetic transcriptional activation.

The protein resides in the nucleus. Its subcellular location is the chromosome. Functionally, core component of nucleosome. Nucleosomes wrap and compact DNA into chromatin, limiting DNA accessibility to the cellular machineries which require DNA as a template. Histones thereby play a central role in transcription regulation, DNA repair, DNA replication and chromosomal stability. DNA accessibility is regulated via a complex set of post-translational modifications of histones, also called histone code, and nucleosome remodeling. The chain is Probable histone H2B.2 from Medicago truncatula (Barrel medic).